Reading from the N-terminus, the 406-residue chain is Argininosuccinate synthase (406 aa).

ATP is bound by residues 13–21 (AYSGGLDTS) and alanine 40. Residues tyrosine 91 and serine 96 each coordinate L-citrulline. Residue glycine 121 coordinates ATP. L-aspartate is bound by residues threonine 123, asparagine 127, and aspartate 128. Asparagine 127 lines the L-citrulline pocket. L-citrulline contacts are provided by arginine 131, serine 182, serine 191, glutamate 267, and tyrosine 279.

It belongs to the argininosuccinate synthase family. Type 1 subfamily. As to quaternary structure, homotetramer.

It is found in the cytoplasm. The enzyme catalyses L-citrulline + L-aspartate + ATP = 2-(N(omega)-L-arginino)succinate + AMP + diphosphate + H(+). Its pathway is amino-acid biosynthesis; L-arginine biosynthesis; L-arginine from L-ornithine and carbamoyl phosphate: step 2/3. This is Argininosuccinate synthase from Brucella suis biovar 1 (strain 1330).